The primary structure comprises 170 residues: Putative phosphoesterase OB1230 (170 aa).

Catalysis depends on H34, which acts as the Proton donor. 2 short sequence motifs (HXTX) span residues 34–37 (HLTL) and 115–118 (HITI). H115 acts as the Proton acceptor in catalysis.

This sequence belongs to the 2H phosphoesterase superfamily. YjcG family.

The chain is Putative phosphoesterase OB1230 from Oceanobacillus iheyensis (strain DSM 14371 / CIP 107618 / JCM 11309 / KCTC 3954 / HTE831).